Reading from the N-terminus, the 274-residue chain is Caldesmon, smooth muscle (274 aa).

2 disordered regions span residues 1 to 102 (SNLK…FSPK) and 179 to 274 (KGNV…EKEP). 2 stretches are compositionally biased toward basic and acidic residues: residues 12–21 (GSEKLKEKQQ) and 28–95 (DELK…EKKP). A compositionally biased stretch (polar residues) spans 182–194 (VFSSPGGTGTPNK). Composition is skewed to basic and acidic residues over residues 226–245 (SDLRPGDVSGKRNLWEKQSV) and 260–274 (KKSETDGLRQFEKEP).

It is found in the cytoplasm. It localises to the cytoskeleton. Its subcellular location is the myofibril. The protein resides in the stress fiber. Functionally, control of actomyosin interactions in smooth muscle and nonmuscle cells (could act as a bridge between myosin and actin filaments). Inhibits the actin-activated ATPase of myosin this inhibition is attenuated by calcium-calmodulin and is potentiated by tropomyosin. Interacts with actin, myosin, 2 molecules of tropomyosin and with calmodulin. The protein is Caldesmon, smooth muscle (CALD1) of Meleagris gallopavo (Wild turkey).